The primary structure comprises 154 residues: SsrA-binding protein (154 aa).

The interval 134 to 154 (ETLRRRDAKREVERALKEKNR) is disordered.

This sequence belongs to the SmpB family.

The protein resides in the cytoplasm. In terms of biological role, required for rescue of stalled ribosomes mediated by trans-translation. Binds to transfer-messenger RNA (tmRNA), required for stable association of tmRNA with ribosomes. tmRNA and SmpB together mimic tRNA shape, replacing the anticodon stem-loop with SmpB. tmRNA is encoded by the ssrA gene; the 2 termini fold to resemble tRNA(Ala) and it encodes a 'tag peptide', a short internal open reading frame. During trans-translation Ala-aminoacylated tmRNA acts like a tRNA, entering the A-site of stalled ribosomes, displacing the stalled mRNA. The ribosome then switches to translate the ORF on the tmRNA; the nascent peptide is terminated with the 'tag peptide' encoded by the tmRNA and targeted for degradation. The ribosome is freed to recommence translation, which seems to be the essential function of trans-translation. The chain is SsrA-binding protein from Halalkalibacterium halodurans (strain ATCC BAA-125 / DSM 18197 / FERM 7344 / JCM 9153 / C-125) (Bacillus halodurans).